Reading from the N-terminus, the 66-residue chain is Sec-independent protein translocase protein TatA (66 aa).

Residues 1-21 (MIGGLGMPELIIILVIILIIF) traverse the membrane as a helical segment. Residues 45–66 (RDAELNEGDKDDKEKEQEKLDK) are disordered.

The protein belongs to the TatA/E family. As to quaternary structure, the Tat system comprises two distinct complexes: a TatABC complex, containing multiple copies of TatA, TatB and TatC subunits, and a separate TatA complex, containing only TatA subunits. Substrates initially bind to the TatABC complex, which probably triggers association of the separate TatA complex to form the active translocon.

Its subcellular location is the cell inner membrane. Part of the twin-arginine translocation (Tat) system that transports large folded proteins containing a characteristic twin-arginine motif in their signal peptide across membranes. TatA could form the protein-conducting channel of the Tat system. The polypeptide is Sec-independent protein translocase protein TatA (Desulforapulum autotrophicum (strain ATCC 43914 / DSM 3382 / VKM B-1955 / HRM2) (Desulfobacterium autotrophicum)).